Here is a 235-residue protein sequence, read N- to C-terminus: 2-C-methyl-D-erythritol 4-phosphate cytidylyltransferase (235 aa).

It belongs to the IspD/TarI cytidylyltransferase family. IspD subfamily.

The catalysed reaction is 2-C-methyl-D-erythritol 4-phosphate + CTP + H(+) = 4-CDP-2-C-methyl-D-erythritol + diphosphate. The protein operates within isoprenoid biosynthesis; isopentenyl diphosphate biosynthesis via DXP pathway; isopentenyl diphosphate from 1-deoxy-D-xylulose 5-phosphate: step 2/6. Catalyzes the formation of 4-diphosphocytidyl-2-C-methyl-D-erythritol from CTP and 2-C-methyl-D-erythritol 4-phosphate (MEP). The polypeptide is 2-C-methyl-D-erythritol 4-phosphate cytidylyltransferase (Pseudomonas fluorescens (strain Pf0-1)).